The primary structure comprises 208 residues: Ribosomal RNA large subunit methyltransferase E (208 aa).

5 residues coordinate S-adenosyl-L-methionine: glycine 63, tryptophan 65, aspartate 83, aspartate 99, and aspartate 124. The active-site Proton acceptor is lysine 164.

It belongs to the class I-like SAM-binding methyltransferase superfamily. RNA methyltransferase RlmE family.

The protein localises to the cytoplasm. The catalysed reaction is uridine(2552) in 23S rRNA + S-adenosyl-L-methionine = 2'-O-methyluridine(2552) in 23S rRNA + S-adenosyl-L-homocysteine + H(+). Functionally, specifically methylates the uridine in position 2552 of 23S rRNA at the 2'-O position of the ribose in the fully assembled 50S ribosomal subunit. The protein is Ribosomal RNA large subunit methyltransferase E of Salmonella paratyphi A (strain ATCC 9150 / SARB42).